The following is a 446-amino-acid chain: Phosphoglucosamine mutase (446 aa).

Ser100 functions as the Phosphoserine intermediate in the catalytic mechanism. 4 residues coordinate Mg(2+): Ser100, Asp239, Asp241, and Asp243. Ser100 carries the phosphoserine modification.

It belongs to the phosphohexose mutase family. The cofactor is Mg(2+). Activated by phosphorylation.

It catalyses the reaction alpha-D-glucosamine 1-phosphate = D-glucosamine 6-phosphate. Catalyzes the conversion of glucosamine-6-phosphate to glucosamine-1-phosphate. This chain is Phosphoglucosamine mutase, found in Oceanobacillus iheyensis (strain DSM 14371 / CIP 107618 / JCM 11309 / KCTC 3954 / HTE831).